The chain runs to 352 residues: Pheromone-regulated membrane protein 6 (352 aa).

Residues 1–36 (MESSLQKLKFQDIDINLIPTAKWTTKLQYILYTWCQ) lie on the Extracellular side of the membrane. A helical membrane pass occupies residues 37 to 57 (SILHVAMFFSDIYTCIKLLAF). At 58-76 (NTWSNNIIQPFLEFRISKW) the chain is on the cytoplasmic side. Residues 77–97 (LFSGCILCSSLILIWELVIGL) traverse the membrane as a helical segment. Over 98-227 (RVYRKKEITS…VILSFMLFSF (130 aa)) the chain is Extracellular. A helical transmembrane segment spans residues 228 to 248 (IIWVILISKLILSIIIFIIFI). The Cytoplasmic segment spans residues 249-352 (RPRFLSSKRK…FPQKYKHKYI (104 aa)).

Belongs to the KCH1 low affinity K(+) transporter family.

It is found in the cell membrane. Its subcellular location is the bud tip. It localises to the vacuole lumen. The catalysed reaction is K(+)(in) = K(+)(out). In terms of biological role, low affinity potassium transporter that, with KCH1, participates in high-affinity Ca(2+) influx system (HACS) activation during the response to mating pheromone. Directly promotes K(+) influx and HACS may electrochemically respond to this K(+) influx. KCH1 and PRM6/KCH2 act at the apex of the calcium signaling pathway that is used for survival during prolonged exposures to mating pheromones. In Saccharomyces cerevisiae (strain ATCC 204508 / S288c) (Baker's yeast), this protein is Pheromone-regulated membrane protein 6.